The primary structure comprises 304 residues: Ribosome-inactivating protein 9 (304 aa).

Glu-208 is an active-site residue.

This sequence belongs to the ribosome-inactivating protein family. Type 1 RIP subfamily. Monomer. As to expression, accumulates to high levels in seeds.

The protein localises to the cytoplasm. It carries out the reaction Endohydrolysis of the N-glycosidic bond at one specific adenosine on the 28S rRNA.. Functionally, possesses features of some constitutive defense agent. The coordinate Opaque-2-controlled synthesis of this protein and the major seed storage proteins (zeins) may provide the germinating seedling with both nutritional benefits and protection against pathogen invasion of the surrounding endosperm. The sequence is that of Ribosome-inactivating protein 9 (CRIP9) from Zea mays (Maize).